The primary structure comprises 2178 residues: DNA-directed RNA polymerase subunit beta (2178 aa).

3 insert regions span residues 269-325 (SKKI…TPFV), 714-1508 (KRID…LFYN), and 1703-1900 (KGND…LQPM).

It belongs to the RNA polymerase beta chain family. As to quaternary structure, in plastids the minimal PEP RNA polymerase catalytic core is composed of four subunits: alpha, beta, beta', and beta''. When a (nuclear-encoded) sigma factor is associated with the core the holoenzyme is formed, which can initiate transcription.

The protein resides in the plastid. The protein localises to the chloroplast. It carries out the reaction RNA(n) + a ribonucleoside 5'-triphosphate = RNA(n+1) + diphosphate. DNA-dependent RNA polymerase catalyzes the transcription of DNA into RNA using the four ribonucleoside triphosphates as substrates. The chain is DNA-directed RNA polymerase subunit beta from Tupiella akineta (Green alga).